Reading from the N-terminus, the 135-residue chain is Cystatin-1 (135 aa).

The N-terminal stretch at 1–24 (MRKHRIVSLVAALLVLLALAAVSS) is a signal peptide. Positions 86–90 (QVVAG) match the Secondary area of contact motif.

Belongs to the cystatin family. Phytocystatin subfamily.

The sequence is that of Cystatin-1 (RAMDAZC7) from Zea mays (Maize).